Here is an 874-residue protein sequence, read N- to C-terminus: Alanine--tRNA ligase (874 aa).

The Zn(2+) site is built by His562, His566, Cys664, and His668.

The protein belongs to the class-II aminoacyl-tRNA synthetase family. It depends on Zn(2+) as a cofactor.

The protein resides in the cytoplasm. The catalysed reaction is tRNA(Ala) + L-alanine + ATP = L-alanyl-tRNA(Ala) + AMP + diphosphate. Catalyzes the attachment of alanine to tRNA(Ala) in a two-step reaction: alanine is first activated by ATP to form Ala-AMP and then transferred to the acceptor end of tRNA(Ala). Also edits incorrectly charged Ser-tRNA(Ala) and Gly-tRNA(Ala) via its editing domain. The protein is Alanine--tRNA ligase of Shewanella putrefaciens (strain CN-32 / ATCC BAA-453).